We begin with the raw amino-acid sequence, 366 residues long: 4-hydroxy-3-methylbut-2-en-1-yl diphosphate synthase (flavodoxin) (366 aa).

4 residues coordinate [4Fe-4S] cluster: Cys-270, Cys-273, Cys-305, and Glu-312.

Belongs to the IspG family. [4Fe-4S] cluster is required as a cofactor.

It carries out the reaction (2E)-4-hydroxy-3-methylbut-2-enyl diphosphate + oxidized [flavodoxin] + H2O + 2 H(+) = 2-C-methyl-D-erythritol 2,4-cyclic diphosphate + reduced [flavodoxin]. The protein operates within isoprenoid biosynthesis; isopentenyl diphosphate biosynthesis via DXP pathway; isopentenyl diphosphate from 1-deoxy-D-xylulose 5-phosphate: step 5/6. Its function is as follows. Converts 2C-methyl-D-erythritol 2,4-cyclodiphosphate (ME-2,4cPP) into 1-hydroxy-2-methyl-2-(E)-butenyl 4-diphosphate. This chain is 4-hydroxy-3-methylbut-2-en-1-yl diphosphate synthase (flavodoxin), found in Wigglesworthia glossinidia brevipalpis.